We begin with the raw amino-acid sequence, 285 residues long: Shikimate dehydrogenase (NADP(+)) (285 aa).

Residues serine 20–serine 22 and threonine 67 contribute to the shikimate site. Lysine 71 acts as the Proton acceptor in catalysis. Glutamate 83 is a binding site for NADP(+). The shikimate site is built by asparagine 92 and aspartate 107. Residues glycine 132 to alanine 136 and leucine 230 contribute to the NADP(+) site. A shikimate-binding site is contributed by tyrosine 232. Glycine 253 is a binding site for NADP(+).

Belongs to the shikimate dehydrogenase family. In terms of assembly, homodimer.

The enzyme catalyses shikimate + NADP(+) = 3-dehydroshikimate + NADPH + H(+). Its pathway is metabolic intermediate biosynthesis; chorismate biosynthesis; chorismate from D-erythrose 4-phosphate and phosphoenolpyruvate: step 4/7. Functionally, involved in the biosynthesis of the chorismate, which leads to the biosynthesis of aromatic amino acids. Catalyzes the reversible NADPH linked reduction of 3-dehydroshikimate (DHSA) to yield shikimate (SA). In Salinibacter ruber (strain DSM 13855 / M31), this protein is Shikimate dehydrogenase (NADP(+)).